A 431-amino-acid chain; its full sequence is Enolase (431 aa).

Gln167 contacts (2R)-2-phosphoglycerate. Glu209 functions as the Proton donor in the catalytic mechanism. Positions 246, 289, and 316 each coordinate Mg(2+). (2R)-2-phosphoglycerate contacts are provided by Lys341, Arg370, Ser371, and Lys392. The Proton acceptor role is filled by Lys341.

Belongs to the enolase family. In terms of assembly, component of the RNA degradosome, a multiprotein complex involved in RNA processing and mRNA degradation. The cofactor is Mg(2+).

The protein resides in the cytoplasm. It is found in the secreted. Its subcellular location is the cell surface. The catalysed reaction is (2R)-2-phosphoglycerate = phosphoenolpyruvate + H2O. Its pathway is carbohydrate degradation; glycolysis; pyruvate from D-glyceraldehyde 3-phosphate: step 4/5. Its function is as follows. Catalyzes the reversible conversion of 2-phosphoglycerate (2-PG) into phosphoenolpyruvate (PEP). It is essential for the degradation of carbohydrates via glycolysis. In Shewanella loihica (strain ATCC BAA-1088 / PV-4), this protein is Enolase.